The primary structure comprises 434 residues: Transcription initiation factor IIE subunit alpha (434 aa).

Residues 8-99 enclose the HTH TFE/IIEalpha-type domain; that stretch reads VQRLIKMIMR…DFCSTIDSIK (92 aa). A C4-type zinc finger spans residues 124–151; sequence CPFCNKKFSSLDVLSLVTNEGTFACNVC. Disordered stretches follow at residues 217-251, 357-408, and 415-434; these read QQNLSKSNSDVRLSTSSPSITVDFSADKETDEKRE, STDY…EMQE, and INGFNEDDEDDEDEADFEDV. Residues 226–238 are compositionally biased toward polar residues; it reads DVRLSTSSPSITV. 2 stretches are compositionally biased toward basic and acidic residues: residues 241 to 251 and 376 to 385; these read SADKETDEKRE and IQNKRTKSIE. Over residues 386-399 the composition is skewed to polar residues; sequence ENNSLPPIVSTNGI. Over residues 419 to 434 the composition is skewed to acidic residues; the sequence is NEDDEDDEDEADFEDV.

The protein belongs to the TFIIE alpha subunit family. As to quaternary structure, TFIIE is a tetramer of two alpha (tfa1) and two beta (tfa2) subunits.

The protein localises to the nucleus. Its function is as follows. Recruits TFIIH to the initiation complex and stimulates the RNA polymerase II C-terminal domain kinase and DNA-dependent ATPase activities of TFIIH. Both TFIIH and TFIIE are required for promoter clearance by RNA polymerase. This is Transcription initiation factor IIE subunit alpha (tfa1) from Schizosaccharomyces pombe (strain 972 / ATCC 24843) (Fission yeast).